The primary structure comprises 552 residues: Non-structural protein NS1 (552 aa).

It belongs to the orbivirus non-structural protein NS1 family.

The protein is Non-structural protein NS1 (Segment-5) of Bluetongue virus 13 (isolate USA) (BTV 13).